We begin with the raw amino-acid sequence, 183 residues long: Threonylcarbamoyl-AMP synthase (183 aa).

The YrdC-like domain occupies 1 to 183 (MNFTEIAEKL…LLTDQLIREG (183 aa)).

Belongs to the SUA5 family. TsaC subfamily.

It localises to the cytoplasm. It catalyses the reaction L-threonine + hydrogencarbonate + ATP = L-threonylcarbamoyladenylate + diphosphate + H2O. Required for the formation of a threonylcarbamoyl group on adenosine at position 37 (t(6)A37) in tRNAs that read codons beginning with adenine. Catalyzes the conversion of L-threonine, HCO(3)(-)/CO(2) and ATP to give threonylcarbamoyl-AMP (TC-AMP) as the acyladenylate intermediate, with the release of diphosphate. This Actinobacillus succinogenes (strain ATCC 55618 / DSM 22257 / CCUG 43843 / 130Z) protein is Threonylcarbamoyl-AMP synthase.